Reading from the N-terminus, the 339-residue chain is Uridylate kinase PUMPKIN, chloroplastic (339 aa).

The N-terminal 53 residues, 1 to 53 (MAIPLPLTSCSPISTSSSISRTSFVPLTLRNRTFFSNQNYSRRVLISCSSSLS), are a transit peptide targeting the chloroplast. A compositionally biased stretch (low complexity) spans 52–79 (LSSDNGSSPDSMNGNGNGNGSSLNGQSS). The tract at residues 52–89 (LSSDNGSSPDSMNGNGNGNGSSLNGQSSFPRLPSFDGT) is disordered. 102–105 (KVSG) is a binding site for ATP. The involved in allosteric activation by GTP stretch occupies residues 110–115 (GDEEQN). A UMP-binding site is contributed by Gly-144. Positions 145 and 149 each coordinate ATP. Asp-165 contacts UMP. ATP-binding positions include 180 to 184 (QATME) and 189 to 191 (PTR). UMP is bound at residue 226-233 (TGNPFFTT). Residues Thr-253, Phe-259, and Asp-262 each contribute to the ATP site.

It belongs to the UMP kinase family. Homomultimer. Homohexamer. Forms RNA-containing megadalton-sized complexes. As to expression, expressed exclusively in leaves, but not in roots.

Its subcellular location is the plastid. The protein localises to the chloroplast stroma. It catalyses the reaction UMP + ATP = UDP + ADP. Its pathway is pyrimidine metabolism; CTP biosynthesis via de novo pathway; UDP from UMP (UMPK route): step 1/1. Its function is as follows. Catalyzes the reversible phosphorylation of UMP to UDP. Required for specific post-transcriptional processes of many plastid transcripts (e.g. PSI (PsaA, PsaF), PSII (D1, CP43, CP47), Cytochrome b(6)f (Cytb(6)), ATP synthase (AtpC), LHCs (LHCa3, LHCb2), and NDH (NdhH)), thus being essential for retaining photosynthetic activity in chloroplasts. Associates with group II introns of the plastid transcripts trnG-UCC, trnV-UAC, petB, petD and ndhA to stabilize corresponding precursor RNAs. This is Uridylate kinase PUMPKIN, chloroplastic from Arabidopsis thaliana (Mouse-ear cress).